The primary structure comprises 404 residues: 1-deoxy-D-xylulose 5-phosphate reductoisomerase (404 aa).

NADPH contacts are provided by Thr10, Gly11, Ser12, Ile13, Gly36, Arg37, Asn38, and Asn124. Residue Lys125 coordinates 1-deoxy-D-xylulose 5-phosphate. Glu126 contributes to the NADPH binding site. Asp150 is a binding site for Mn(2+). Residues Ser151, Glu152, Ser186, and His209 each contribute to the 1-deoxy-D-xylulose 5-phosphate site. Glu152 serves as a coordination point for Mn(2+). Gly215 is an NADPH binding site. The 1-deoxy-D-xylulose 5-phosphate site is built by Ser222, Asn227, Lys228, and Glu231. Residue Glu231 coordinates Mn(2+).

The protein belongs to the DXR family. Homodimer. Mg(2+) serves as cofactor. Mn(2+) is required as a cofactor.

It carries out the reaction 2-C-methyl-D-erythritol 4-phosphate + NADP(+) = 1-deoxy-D-xylulose 5-phosphate + NADPH + H(+). It functions in the pathway isoprenoid biosynthesis; isopentenyl diphosphate biosynthesis via DXP pathway; isopentenyl diphosphate from 1-deoxy-D-xylulose 5-phosphate: step 1/6. Its function is as follows. Catalyzes the NADPH-dependent rearrangement and reduction of 1-deoxy-D-xylulose-5-phosphate (DXP) to 2-C-methyl-D-erythritol 4-phosphate (MEP). This is 1-deoxy-D-xylulose 5-phosphate reductoisomerase from Erwinia tasmaniensis (strain DSM 17950 / CFBP 7177 / CIP 109463 / NCPPB 4357 / Et1/99).